A 280-amino-acid chain; its full sequence is 2,3,4,5-tetrahydropyridine-2,6-dicarboxylate N-succinyltransferase (280 aa).

It belongs to the transferase hexapeptide repeat family.

It localises to the cytoplasm. The enzyme catalyses (S)-2,3,4,5-tetrahydrodipicolinate + succinyl-CoA + H2O = (S)-2-succinylamino-6-oxoheptanedioate + CoA. Its pathway is amino-acid biosynthesis; L-lysine biosynthesis via DAP pathway; LL-2,6-diaminopimelate from (S)-tetrahydrodipicolinate (succinylase route): step 1/3. In Methylorubrum populi (strain ATCC BAA-705 / NCIMB 13946 / BJ001) (Methylobacterium populi), this protein is 2,3,4,5-tetrahydropyridine-2,6-dicarboxylate N-succinyltransferase.